The following is a 562-amino-acid chain: Catalase T (562 aa).

Active-site residues include His-64 and Asn-137. Heme is bound at residue Tyr-351.

Belongs to the catalase family. As to quaternary structure, homotetramer. Heme serves as cofactor.

Its subcellular location is the cytoplasm. It catalyses the reaction 2 H2O2 = O2 + 2 H2O. In terms of biological role, occurs in almost all aerobically respiring organisms and serves to protect cells from the toxic effects of hydrogen peroxide. This Saccharomyces cerevisiae (strain YJM789) (Baker's yeast) protein is Catalase T (CTT1).